The sequence spans 371 residues: Queuine tRNA-ribosyltransferase (371 aa).

The active-site Proton acceptor is the aspartate 90. Substrate is bound by residues 90–94 (DSGGF), aspartate 144, glutamine 189, and glycine 215. The interval 246–252 (GVGTPEN) is RNA binding. Aspartate 265 acts as the Nucleophile in catalysis. The tract at residues 270–274 (TRNAR) is RNA binding; important for wobble base 34 recognition. Cysteine 303, cysteine 305, cysteine 308, and histidine 334 together coordinate Zn(2+).

It belongs to the queuine tRNA-ribosyltransferase family. In terms of assembly, homodimer. Within each dimer, one monomer is responsible for RNA recognition and catalysis, while the other monomer binds to the replacement base PreQ1. Requires Zn(2+) as cofactor.

It carries out the reaction 7-aminomethyl-7-carbaguanine + guanosine(34) in tRNA = 7-aminomethyl-7-carbaguanosine(34) in tRNA + guanine. It participates in tRNA modification; tRNA-queuosine biosynthesis. Its function is as follows. Catalyzes the base-exchange of a guanine (G) residue with the queuine precursor 7-aminomethyl-7-deazaguanine (PreQ1) at position 34 (anticodon wobble position) in tRNAs with GU(N) anticodons (tRNA-Asp, -Asn, -His and -Tyr). Catalysis occurs through a double-displacement mechanism. The nucleophile active site attacks the C1' of nucleotide 34 to detach the guanine base from the RNA, forming a covalent enzyme-RNA intermediate. The proton acceptor active site deprotonates the incoming PreQ1, allowing a nucleophilic attack on the C1' of the ribose to form the product. After dissociation, two additional enzymatic reactions on the tRNA convert PreQ1 to queuine (Q), resulting in the hypermodified nucleoside queuosine (7-(((4,5-cis-dihydroxy-2-cyclopenten-1-yl)amino)methyl)-7-deazaguanosine). The polypeptide is Queuine tRNA-ribosyltransferase (Helicobacter pylori (strain Shi470)).